Consider the following 102-residue polypeptide: Fe-S protein maturation auxiliary factor YitW (102 aa).

Belongs to the MIP18 family.

Functionally, involved in the maturation of iron-sulfur (Fe-S) proteins. May function as a Fe-S cluster carrier. In Bacillus subtilis (strain 168), this protein is Fe-S protein maturation auxiliary factor YitW (yitW).